The chain runs to 132 residues: Small ribosomal subunit protein uS8 (132 aa).

This sequence belongs to the universal ribosomal protein uS8 family. As to quaternary structure, part of the 30S ribosomal subunit. Contacts proteins S5 and S12.

Functionally, one of the primary rRNA binding proteins, it binds directly to 16S rRNA central domain where it helps coordinate assembly of the platform of the 30S subunit. This chain is Small ribosomal subunit protein uS8, found in Sinorhizobium medicae (strain WSM419) (Ensifer medicae).